The chain runs to 201 residues: L-rhamnose-binding lectin SML (201 aa).

8 cysteine pairs are disulfide-bonded: C10/C40, C20/C99, C54/C86, C67/C73, C108/C138, C117/C195, C152/C182, and C163/C169. 2 consecutive SUEL-type lectin domains span residues 18 to 100 (LSCD…YNCF) and 107 to 196 (TCEH…YVCQ). The N-linked (GlcNAc...) asparagine glycan is linked to N168.

As to quaternary structure, homodimer; non-covalently linked.

In terms of biological role, rhamnose-binding lectin. Also binds melibiose, raffinose, D-galactose, L-arabinose, D-fucose, maltose and D-glucose with decreasing affinity. Does not bind D-arabinose, L-fucose, lactose, xylose or 2-deoxy-D-galactose. Shows strong hemagglutinating activity against rabbit erythrocytes. In Scomberomorus niphonius (Japanese Spanish mackerel), this protein is L-rhamnose-binding lectin SML.